The following is a 1459-amino-acid chain: Mediator of RNA polymerase II transcription subunit 14 (1459 aa).

Residues 1–37 form a disordered region; the sequence is MAPVQLDNHQLIPPGGGGGSSGGGGSSSGSASAPAPP. Over residues 14 to 27 the composition is skewed to gly residues; the sequence is PGGGGGSSGGGGSS. An LXXLL motif 1 motif is present at residues 75–79; the sequence is LTDLL. Residues 194 to 572 form an interaction with STAT2 region; that stretch reads KQATLHQLNQ…VPNKPTQLSY (379 aa). The tract at residues 506-830 is interaction with SREBF1; sequence LGQQRCKQSI…TKGSSISIQW (325 aa). Phosphoserine is present on residues Ser-623 and Ser-992. The disordered stretch occupies residues 979-1171; sequence ARRRSVNEDD…NMPPPRKLPQ (193 aa). Composition is skewed to polar residues over residues 1029–1059 and 1097–1106; these read PPTSYHSTVNQSPSMMHTQSPGNLHAASSPS and DPSSPYTMVS. 5 positions are modified to phosphoserine: Ser-1117, Ser-1124, Ser-1133, Ser-1141, and Ser-1149. The span at 1152–1161 shows a compositional bias: polar residues; it reads AGTSSQTMPT. The LXXLL motif 2 signature appears at 1187–1191; sequence LNILL.

This sequence belongs to the Mediator complex subunit 14 family. In terms of assembly, component of the Mediator complex, which is composed of MED1, MED4, MED6, MED7, MED8, MED9, MED10, MED11, MED12, MED13, MED13L, MED14, MED15, MED16, MED17, MED18, MED19, MED20, MED21, MED22, MED23, MED24, MED25, MED26, MED27, MED29, MED30, MED31, CCNC, CDK8 and CDC2L6/CDK11. The MED12, MED13, CCNC and CDK8 subunits form a distinct module termed the CDK8 module. Mediator containing the CDK8 module is less active than Mediator lacking this module in supporting transcriptional activation. Individual preparations of the Mediator complex lacking one or more distinct subunits have been variously termed ARC, CRSP, DRIP, PC2, SMCC and TRAP. Interacts with AR, ESR1, SREBF1 and STAT2. Interacts with GATA1.

The protein resides in the nucleus. Its function is as follows. Component of the Mediator complex, a coactivator involved in the regulated transcription of nearly all RNA polymerase II-dependent genes. Mediator functions as a bridge to convey information from gene-specific regulatory proteins to the basal RNA polymerase II transcription machinery. Mediator is recruited to promoters by direct interactions with regulatory proteins and serves as a scaffold for the assembly of a functional preinitiation complex with RNA polymerase II and the general transcription factors. This Mus musculus (Mouse) protein is Mediator of RNA polymerase II transcription subunit 14 (Med14).